Consider the following 369-residue polypeptide: Anhydro-N-acetylmuramic acid kinase (369 aa).

12–19 (GTSMDGVD) is a binding site for ATP.

Belongs to the anhydro-N-acetylmuramic acid kinase family.

It carries out the reaction 1,6-anhydro-N-acetyl-beta-muramate + ATP + H2O = N-acetyl-D-muramate 6-phosphate + ADP + H(+). It participates in amino-sugar metabolism; 1,6-anhydro-N-acetylmuramate degradation. Its pathway is cell wall biogenesis; peptidoglycan recycling. In terms of biological role, catalyzes the specific phosphorylation of 1,6-anhydro-N-acetylmuramic acid (anhMurNAc) with the simultaneous cleavage of the 1,6-anhydro ring, generating MurNAc-6-P. Is required for the utilization of anhMurNAc either imported from the medium or derived from its own cell wall murein, and thus plays a role in cell wall recycling. The polypeptide is Anhydro-N-acetylmuramic acid kinase (Shewanella baltica (strain OS185)).